The following is a 158-amino-acid chain: Glycine-rich RNA-binding protein 2, mitochondrial (158 aa).

The N-terminal 34 residues, 1 to 34 (MAFCNKLGGLLRQNISSNGNVPVTSMLGSLRLMS), are a transit peptide targeting the mitochondrion. The RRM domain occupies 35 to 113 (TKLFIGGLSW…RHIRVNPAND (79 aa)). Serine 43 carries the post-translational modification Phosphoserine. Positions 122 to 157 (GGGGGYSGGGGGYGGGGGGYGGGGGGYGGGGDGGGG) are glycine-rich (GR) required for cell-to-cell movement.

It belongs to the GR-RBP family. As to quaternary structure, binds to small phloem-mobile single-stranded RNAs (ss-sRNA, e.g. small interfering RNA (siRNA) and microRNA (miRNA)) in the phloeme exudate, including viral-derived sRNA (vsiRNA). Interacts with ORRM2, RBG3/ORRM3 and RBG5/ORRM4.

Its subcellular location is the mitochondrion. It is found in the secreted. Functionally, promotes the cis-splicing and editing of several mitochondrial RNAs (including NAD5 transcripts). Plays a role in RNA transcription or processing during stress. Binds RNAs and DNAs sequence with a preference to single-stranded nucleic acids. Displays strong affinity to poly(U) sequence. Exerts cold and freezing tolerance, probably by exhibiting an RNA chaperone activity during the cold and freezing adaptation process. Mediates cell-to-cell trafficking of RNA interference (RNAi) signals (small RNAs (sRNA), e.g. small interfering RNA (siRNA) and microRNA (miRNA)) which regulate growth and development, as well as responses to environmental inputs, including pathogen attack; can compromise zucchini yellow mosaic virus (ZYMV) and tobacco rattle virus (TRV) infections at the early stage. The protein is Glycine-rich RNA-binding protein 2, mitochondrial of Arabidopsis thaliana (Mouse-ear cress).